The sequence spans 2212 residues: Nonribosomal peptide synthetase ftmPS (2212 aa).

An adenylation 1 region spans residues 74–473 (TYAELDSLSD…IEHHLQQTLP (400 aa)). Residues 592–669 (PPSTLKETTI…EQSQRAGLIQ (78 aa)) form the Carrier 1 domain. Serine 629 bears the O-(pantetheine 4'-phosphoryl)serine mark. The interval 708-973 (EDIYPCTALQ…IATVPLRIRV (266 aa)) is condensation 1. The tract at residues 1167 to 1564 (TYRELWAHSS…LSAVEASLMR (398 aa)) is adenylation 2. Positions 1678 to 1757 (PMSDDNERRL…QFRHLITEDD (80 aa)) constitute a Carrier 2 domain. Serine 1715 carries the O-(pantetheine 4'-phosphoryl)serine modification. Residues 1815–2070 (HFQFDLSGAI…CTNYIPYRLS (256 aa)) form a condensation 2 region.

This sequence belongs to the NRP synthetase family.

The enzyme catalyses L-proline + L-tryptophan + 2 ATP = brevianamide F + 2 AMP + 2 diphosphate + 2 H(+). It functions in the pathway mycotoxin biosynthesis. In terms of biological role, nonribosomal peptide synthetase; part of the gene cluster that mediates the biosynthesis of fumitremorgins, indole alkaloids that carry not only intriguing chemical structures, but also interesting biological and pharmacological activities. The biosynthesis of fumitremorgin-type alkaloids begins by condensation of the two amino acids L-tryptophan and L-proline to brevianamide F, catalyzed by the non-ribosomal peptide synthetase ftmPS/ftmA. Brevianamide F is then prenylated by the prenyltransferase ftmPT1/ftmB in the presence of dimethylallyl diphosphate, resulting in the formation of tryprostatin B. The three cytochrome P450 monooxygenases, ftmP450-1/ftmC, ftmP450-2/ftmE and ftmP450-3/FtmG, are responsible for the conversion of tryprostatin B to 6-hydroxytryprostatin B, tryprostatin A to fumitremorgin C and fumitremorgin C to 12,13-dihydroxyfumitremorgin C, respectively. The putative methyltransferase ftmMT/ftmD is expected for the conversion of 6-hydroxytryprostatin B to tryprostatin A. FtmPT2/FtmH catalyzes the prenylation of 12,13-dihydroxyfumitre-morgin C in the presence of dimethylallyl diphosphate, resulting in the formation of fumitremorgin B. Fumitremorgin B is further converted to verruculogen by ftmOx1/ftmF via the insertion of an endoperoxide bond between the two prenyl moieties. Finally, verruculogen is further converted to fumitremorgin A by the verruculogen prenyltransferase ftmPT3. The sequence is that of Nonribosomal peptide synthetase ftmPS (ftmPS) from Neosartorya fischeri (strain ATCC 1020 / DSM 3700 / CBS 544.65 / FGSC A1164 / JCM 1740 / NRRL 181 / WB 181) (Aspergillus fischerianus).